We begin with the raw amino-acid sequence, 307 residues long: UDP-N-acetylenolpyruvoylglucosamine reductase (307 aa).

The region spanning 33–198 is the FAD-binding PCMH-type domain; sequence KVGGPVDILV…LEAILKLSLG (166 aa). Residue Arg-177 is part of the active site. Ser-227 acts as the Proton donor in catalysis. The active site involves Glu-297.

The protein belongs to the MurB family. Requires FAD as cofactor.

Its subcellular location is the cytoplasm. The catalysed reaction is UDP-N-acetyl-alpha-D-muramate + NADP(+) = UDP-N-acetyl-3-O-(1-carboxyvinyl)-alpha-D-glucosamine + NADPH + H(+). The protein operates within cell wall biogenesis; peptidoglycan biosynthesis. Functionally, cell wall formation. This is UDP-N-acetylenolpyruvoylglucosamine reductase from Clostridium tetani (strain Massachusetts / E88).